A 424-amino-acid polypeptide reads, in one-letter code: Vasopressin V1b receptor (424 aa).

A disordered region spans residues Met-1 to Ala-22. Topologically, residues Met-1–Lys-35 are extracellular. Positions Pro-13–Ala-22 are enriched in polar residues. Asn-21 is a glycosylation site (N-linked (GlcNAc...) asparagine). A helical membrane pass occupies residues Val-36 to Leu-59. The Cytoplasmic segment spans residues Gly-60–Leu-71. Residues Phe-72–Leu-93 traverse the membrane as a helical segment. At Trp-94–Arg-108 the chain is on the extracellular side. The cysteines at positions 107 and 186 are disulfide-linked. Residues Ala-109–Leu-130 form a helical membrane-spanning segment. Over Asp-131 to Tyr-151 the chain is Cytoplasmic. A helical transmembrane segment spans residues Leu-152 to Ser-173. The Extracellular segment spans residues Leu-174–Thr-201. The helical transmembrane segment at Trp-202–Ile-222 threads the bilayer. Residues Cys-223–Thr-283 are Cytoplasmic-facing. Residues Phe-284 to Trp-303 traverse the membrane as a helical segment. The Extracellular portion of the chain corresponds to Ser-304 to Thr-321. A helical transmembrane segment spans residues Ile-322–Phe-341. Over Asn-342–Phe-424 the chain is Cytoplasmic. The disordered stretch occupies residues Ser-398–Gly-417. The segment covering Pro-401–Glu-411 has biased composition (basic and acidic residues).

The protein belongs to the G-protein coupled receptor 1 family. Vasopressin/oxytocin receptor subfamily.

The protein resides in the cell membrane. Its function is as follows. Receptor for arginine vasopressin. The activity of this receptor is mediated by G proteins which activate a phosphatidyl-inositol-calcium second messenger system. (Microbial infection) During SARS coronavirus-2/SARS-CoV-2 infection, may recognize and internalize the complex formed by AVP/Arg-vasopressin, SARS-CoV-2 spike protein and secreted ACE2 through DNM2/dynamin 2-dependent endocytosis. The sequence is that of Vasopressin V1b receptor from Homo sapiens (Human).